We begin with the raw amino-acid sequence, 254 residues long: Thiazole synthase (254 aa).

Catalysis depends on K95, which acts as the Schiff-base intermediate with DXP. Residues G156, 182–183 (AG), and 204–205 (NT) contribute to the 1-deoxy-D-xylulose 5-phosphate site.

The protein belongs to the ThiG family. As to quaternary structure, homotetramer. Forms heterodimers with either ThiH or ThiS.

It is found in the cytoplasm. The enzyme catalyses [ThiS sulfur-carrier protein]-C-terminal-Gly-aminoethanethioate + 2-iminoacetate + 1-deoxy-D-xylulose 5-phosphate = [ThiS sulfur-carrier protein]-C-terminal Gly-Gly + 2-[(2R,5Z)-2-carboxy-4-methylthiazol-5(2H)-ylidene]ethyl phosphate + 2 H2O + H(+). Its pathway is cofactor biosynthesis; thiamine diphosphate biosynthesis. Functionally, catalyzes the rearrangement of 1-deoxy-D-xylulose 5-phosphate (DXP) to produce the thiazole phosphate moiety of thiamine. Sulfur is provided by the thiocarboxylate moiety of the carrier protein ThiS. In vitro, sulfur can be provided by H(2)S. The polypeptide is Thiazole synthase (Shewanella baltica (strain OS195)).